The primary structure comprises 88 residues: HssA/B-like protein 61 (88 aa).

Belongs to the hssA/B family.

The sequence is that of HssA/B-like protein 61 (hssl61) from Dictyostelium discoideum (Social amoeba).